The chain runs to 568 residues: MARVEL domain-containing protein 2 (568 aa).

2 disordered regions span residues 1–72 (MSGG…YPSD) and 116–163 (SGGV…SYNS). The Cytoplasmic segment spans residues 1–211 (MSGGGSSSGP…YMKSWAGLLR (211 aa)). The span at 29–46 (ADPRHPETNLETLHDRDL) shows a compositional bias: basic and acidic residues. Pro residues predominate over residues 52-62 (PLPPPPLPLHP). The region spanning 205–379 (SWAGLLRILC…SAMVSLKLWR (175 aa)) is the MARVEL domain. The chain crosses the membrane as a helical span at residues 212–232 (ILCIVELLLGAAVFACVTAYI). Topologically, residues 233 to 266 (HKDNEWYNMFGYSQPYGYTASMQGGYYYSGPKTP) are extracellular. A helical transmembrane segment spans residues 267 to 287 (FVLVVAGLAWIVTIILLVLGM). The Cytoplasmic segment spans residues 288-303 (SMYYRTILLDSTWWPL). Residues 304 to 324 (TEFGINISLFILYMAGAIVYV) form a helical membrane-spanning segment. Topologically, residues 325–354 (NDTNRGGLCYYQLFNTPVNASFCRVEGGQT) are extracellular. Residues 355–375 (AAIIFLFVSMLMYFISAMVSL) form a helical membrane-spanning segment. Over 376–568 (KLWRHESARK…KVMDWNDGYN (193 aa)) the chain is Cytoplasmic. An OCEL domain is found at 451-562 (PDYVAKYQAI…RIQEYDKVMD (112 aa)). The stretch at 462 to 559 (AEDERERYKA…IKQRIQEYDK (98 aa)) forms a coiled coil.

Belongs to the ELL/occludin family.

It is found in the cell membrane. Its subcellular location is the cell junction. It localises to the tight junction. May play a role in the formation of the epithelial barrier. The chain is MARVEL domain-containing protein 2 (marveld2) from Xenopus tropicalis (Western clawed frog).